A 337-amino-acid chain; its full sequence is Fructose-1,6-bisphosphatase class 1 (337 aa).

Mg(2+) contacts are provided by Glu94, Asp116, Leu118, and Asp119. Substrate contacts are provided by residues 119–122 (DGSS), Asn210, and Lys276. Position 282 (Glu282) interacts with Mg(2+).

The protein belongs to the FBPase class 1 family. Homotetramer. Mg(2+) is required as a cofactor.

It localises to the cytoplasm. It catalyses the reaction beta-D-fructose 1,6-bisphosphate + H2O = beta-D-fructose 6-phosphate + phosphate. It participates in carbohydrate biosynthesis; gluconeogenesis. This chain is Fructose-1,6-bisphosphatase class 1, found in Burkholderia vietnamiensis (strain G4 / LMG 22486) (Burkholderia cepacia (strain R1808)).